Here is a 407-residue protein sequence, read N- to C-terminus: Serine hydroxymethyltransferase (407 aa).

Residues Leu120 and 124-126 each bind (6S)-5,6,7,8-tetrahydrofolate; that span reads GHL. Lys229 carries the N6-(pyridoxal phosphate)lysine modification.

It belongs to the SHMT family. In terms of assembly, homodimer. Pyridoxal 5'-phosphate is required as a cofactor.

The protein resides in the cytoplasm. The enzyme catalyses (6R)-5,10-methylene-5,6,7,8-tetrahydrofolate + glycine + H2O = (6S)-5,6,7,8-tetrahydrofolate + L-serine. It functions in the pathway one-carbon metabolism; tetrahydrofolate interconversion. The protein operates within amino-acid biosynthesis; glycine biosynthesis; glycine from L-serine: step 1/1. In terms of biological role, catalyzes the reversible interconversion of serine and glycine with tetrahydrofolate (THF) serving as the one-carbon carrier. This reaction serves as the major source of one-carbon groups required for the biosynthesis of purines, thymidylate, methionine, and other important biomolecules. Also exhibits THF-independent aldolase activity toward beta-hydroxyamino acids, producing glycine and aldehydes, via a retro-aldol mechanism. The sequence is that of Serine hydroxymethyltransferase from Deinococcus deserti (strain DSM 17065 / CIP 109153 / LMG 22923 / VCD115).